A 608-amino-acid polypeptide reads, in one-letter code: Albumin (608 aa).

A signal peptide spans 1-18; the sequence is MKWVTFISLFFLFSSAYS. A propeptide spanning residues 19–24 is cleaved from the precursor; it reads RGLVRR. Albumin domains follow at residues 19–210, 211–403, and 404–601; these read RGLV…EALR, EKVL…EFKP, and LVDE…KLVA. Ser29 carries the phosphoserine modification. The Ca(2+) site is built by Glu30 and Asp37. A disulfide bond links Cys77 and Cys86. Residues Ser82 and Ser89 each carry the phosphoserine modification. His91 serves as a coordination point for Zn(2+). Cystine bridges form between Cys99–Cys115, Cys114–Cys125, Cys148–Cys193, Cys192–Cys201, Cys224–Cys270, and Cys269–Cys277. The residue at position 229 (Lys229) is an N6-succinyllysine. Glu268 lines the Ca(2+) pocket. Positions 271 and 273 each coordinate Zn(2+). Ca(2+)-binding residues include Asp273, Glu276, Asp279, and Asp283. Intrachain disulfides connect Cys289/Cys303, Cys302/Cys313, Cys340/Cys385, Cys384/Cys393, Cys416/Cys462, Cys461/Cys472, Cys485/Cys501, and Cys500/Cys511. Ser443 is subject to Phosphoserine. 2 positions are modified to phosphothreonine: Thr444 and Thr446. An N6-succinyllysine modification is found at Lys460. At Ser513 the chain carries Phosphoserine. 2 disulfides stabilise this stretch: Cys538–Cys583 and Cys582–Cys591. Position 558 is an N6-methyllysine (Lys558). Thr570 carries the phosphothreonine modification. Lys588 carries the post-translational modification N6-succinyllysine.

It belongs to the ALB/AFP/VDB family. Interacts with FCGRT; this interaction regulates ALB homeostasis. Interacts with TASOR. In plasma, occurs in a covalently-linked complex with chromophore-bound alpha-1-microglobulin; this interaction does not prevent fatty acid binding to ALB. Post-translationally, phosphorylated by FAM20C in the extracellular medium. As to expression, plasma.

It is found in the secreted. Its function is as follows. Binds water, Ca(2+), Na(+), K(+), fatty acids, hormones, bilirubin and drugs. Its main function is the regulation of the colloidal osmotic pressure of blood. Major zinc transporter in plasma, typically binds about 80% of all plasma zinc. Major calcium and magnesium transporter in plasma, binds approximately 45% of circulating calcium and magnesium in plasma. Potentially has more than two calcium-binding sites and might additionally bind calcium in a non-specific manner. The shared binding site between zinc and calcium at residue Asp-273 suggests a crosstalk between zinc and calcium transport in the blood. The rank order of affinity is zinc &gt; calcium &gt; magnesium. Binds to the bacterial siderophore enterobactin and inhibits enterobactin-mediated iron uptake of E.coli from ferric transferrin, and may thereby limit the utilization of iron and growth of enteric bacteria such as E.coli. Does not prevent iron uptake by the bacterial siderophore aerobactin. This Canis lupus familiaris (Dog) protein is Albumin (ALB).